Here is a 332-residue protein sequence, read N- to C-terminus: BRISC and BRCA1-A complex member 1 (332 aa).

Methionine 1 is subject to N-acetylmethionine. The disordered stretch occupies residues 1–88; that stretch reads MEVAEPSCPT…PPPAPEVQVR (88 aa). A compositionally biased stretch (acidic residues) spans 10 to 23; it reads TEEEEEEEEEEEQS. Residues serine 32, serine 52, and serine 60 each carry the phosphoserine modification. Residues 70–83 show a composition bias toward pro residues; sequence GAGPKPWQVPPPAP. Residues 98–301 are VWFA-like; sequence VIICLDLSEE…LELHNCMAKL (204 aa).

It belongs to the BABAM1 family. Component of the ARISC complex, at least composed of UIMC1/RAP80, ABRAXAS1, BRCC3/BRCC36, BABAM2 and BABAM1/NBA1. Component of the BRCA1-A complex, at least composed of BRCA1, BARD1, UIMC1/RAP80, ABRAXAS1, BRCC3/BRCC36, BABAM2 and BABAM1/NBA1. In the BRCA1-A complex, interacts directly with ABRAXAS1 and BABAM2. Component of the BRISC complex, at least composed of ABRAXAS2, BRCC3/BRCC36, BABAM2 and BABAM1/NBA1. Identified in a complex with SHMT2 and the other subunits of the BRISC complex.

The protein resides in the cytoplasm. It is found in the nucleus. In terms of biological role, component of the BRCA1-A complex, a complex that specifically recognizes 'Lys-63'-linked ubiquitinated histones H2A and H2AX at DNA lesions sites, leading to target the BRCA1-BARD1 heterodimer to sites of DNA damage at double-strand breaks (DSBs). The BRCA1-A complex also possesses deubiquitinase activity that specifically removes 'Lys-63'-linked ubiquitin on histones H2A and H2AX. In the BRCA1-A complex, it is required for the complex integrity and its localization at DSBs. Component of the BRISC complex, a multiprotein complex that specifically cleaves 'Lys-63'-linked ubiquitin in various substrates. In these 2 complexes, it is probably required to maintain the stability of BABAM2 and help the 'Lys-63'-linked deubiquitinase activity mediated by BRCC3/BRCC36 component. The BRISC complex is required for normal mitotic spindle assembly and microtubule attachment to kinetochores via its role in deubiquitinating NUMA1. Plays a role in interferon signaling via its role in the deubiquitination of the interferon receptor IFNAR1; deubiquitination increases IFNAR1 activity by enhancing its stability and cell surface expression. Down-regulates the response to bacterial lipopolysaccharide (LPS) via its role in IFNAR1 deubiquitination. The sequence is that of BRISC and BRCA1-A complex member 1 (BABAM1) from Bos taurus (Bovine).